The following is a 123-amino-acid chain: Glutaredoxin-like protein (123 aa).

The region spanning 27 to 123 (INEVEESITN…GTLFNDLKKK (97 aa)) is the Glutaredoxin domain.

The protein belongs to the glutaredoxin family.

This Dictyostelium discoideum (Social amoeba) protein is Glutaredoxin-like protein (grxB).